Consider the following 324-residue polypeptide: MKPSVILYKALPDDLLQRLQEHFTVHQVANLSPQTVEQNAAIFAEAEGLLGSNENVDAALLEKMPKLRATSTISVGYDNFDVDALTARKILLMHTPTVLTETVADTLMALVLSTARRVVEVAERVKAGGWTASIGPDWYGTDVHHKTLGIVGMGRIGMALAQRAHFGFNMPILYNARRHHKEAEERFNARYCDLDTLLQESDFVCLILPLTDETHHLFGAEQFAKMKSSAIFINAGRGPVVDENALIAALQKGEIHAAGLDVFEQEPLSVDSPLLSMANVVAVPHIGSATHETRYGMAACAVDNLIDALQGKVEKNCVNPHVAD.

Catalysis depends on residues Arg-237 and Glu-266. His-285 functions as the Proton donor in the catalytic mechanism.

Belongs to the D-isomer specific 2-hydroxyacid dehydrogenase family. GhrB subfamily. As to quaternary structure, homodimer.

Its subcellular location is the cytoplasm. It carries out the reaction glycolate + NADP(+) = glyoxylate + NADPH + H(+). It catalyses the reaction (R)-glycerate + NAD(+) = 3-hydroxypyruvate + NADH + H(+). The catalysed reaction is (R)-glycerate + NADP(+) = 3-hydroxypyruvate + NADPH + H(+). In terms of biological role, catalyzes the NADPH-dependent reduction of glyoxylate and hydroxypyruvate into glycolate and glycerate, respectively. In Escherichia coli O9:H4 (strain HS), this protein is Glyoxylate/hydroxypyruvate reductase B.